Here is a 117-residue protein sequence, read N- to C-terminus: NLIQFGNMIQCANKGSRPTRHYMDYGCYCGWGGSGTPVDELDRCCQTHDDCYGEAEKKGCYPKLTLYSWDCTGNVPICSPKAECKDFVCACDAEAAKCFAKATYNDANWNIDTKTRC.

Cystine bridges form between Cys11/Cys71, Cys27/Cys117, Cys29/Cys45, Cys44/Cys98, Cys51/Cys91, Cys60/Cys84, and Cys78/Cys89. Ca(2+)-binding residues include Tyr28, Gly30, and Gly32. His48 is a catalytic residue. Position 49 (Asp49) interacts with Ca(2+). Residue Asp92 is part of the active site.

The protein belongs to the phospholipase A2 family. Group I subfamily. D49 sub-subfamily. The cofactor is Ca(2+). As to expression, expressed by the venom gland.

Its subcellular location is the secreted. The enzyme catalyses a 1,2-diacyl-sn-glycero-3-phosphocholine + H2O = a 1-acyl-sn-glycero-3-phosphocholine + a fatty acid + H(+). Its function is as follows. PLA2 catalyzes the calcium-dependent hydrolysis of the 2-acyl groups in 3-sn-phosphoglycerides. This chain is Acidic phospholipase A2 PA-1G, found in Pseudechis australis (Mulga snake).